A 36-amino-acid polypeptide reads, in one-letter code: Photosystem II reaction center protein M (36 aa).

A helical transmembrane segment spans residues 5–25 (ILGVIATALFIIIPTSFLLIL).

Belongs to the PsbM family. In terms of assembly, PSII is composed of 1 copy each of membrane proteins PsbA, PsbB, PsbC, PsbD, PsbE, PsbF, PsbH, PsbI, PsbJ, PsbK, PsbL, PsbM, PsbT, PsbX, PsbY, PsbZ, Psb30/Ycf12, at least 3 peripheral proteins of the oxygen-evolving complex and a large number of cofactors. It forms dimeric complexes.

It localises to the plastid. It is found in the chloroplast thylakoid membrane. One of the components of the core complex of photosystem II (PSII). PSII is a light-driven water:plastoquinone oxidoreductase that uses light energy to abstract electrons from H(2)O, generating O(2) and a proton gradient subsequently used for ATP formation. It consists of a core antenna complex that captures photons, and an electron transfer chain that converts photonic excitation into a charge separation. This subunit is found at the monomer-monomer interface. The polypeptide is Photosystem II reaction center protein M (Chlorella vulgaris (Green alga)).